Reading from the N-terminus, the 88-residue chain is Monensin polyketide synthase acyl carrier protein (88 aa).

A Carrier domain is found at 5–82 (PFTLADLQRI…ELIDHVNERL (78 aa)). At Ser42 the chain carries O-(pantetheine 4'-phosphoryl)serine.

4'-phosphopantetheine is transferred from CoA to a specific serine of the apo-ACP-like protein.

Its pathway is antifungal biosynthesis; monensin biosynthesis. Acyl carrier protein. This is Monensin polyketide synthase acyl carrier protein from Streptomyces virginiae (Streptomyces cinnamonensis).